A 425-amino-acid chain; its full sequence is Serine hydroxymethyltransferase (425 aa).

Residues Leu123 and 127–129 contribute to the (6S)-5,6,7,8-tetrahydrofolate site; that span reads GHL. The residue at position 232 (Lys232) is an N6-(pyridoxal phosphate)lysine. Position 248 (Glu248) interacts with (6S)-5,6,7,8-tetrahydrofolate.

The protein belongs to the SHMT family. In terms of assembly, homodimer. It depends on pyridoxal 5'-phosphate as a cofactor.

It is found in the cytoplasm. It catalyses the reaction (6R)-5,10-methylene-5,6,7,8-tetrahydrofolate + glycine + H2O = (6S)-5,6,7,8-tetrahydrofolate + L-serine. It participates in one-carbon metabolism; tetrahydrofolate interconversion. It functions in the pathway amino-acid biosynthesis; glycine biosynthesis; glycine from L-serine: step 1/1. In terms of biological role, catalyzes the reversible interconversion of serine and glycine with tetrahydrofolate (THF) serving as the one-carbon carrier. This reaction serves as the major source of one-carbon groups required for the biosynthesis of purines, thymidylate, methionine, and other important biomolecules. Also exhibits THF-independent aldolase activity toward beta-hydroxyamino acids, producing glycine and aldehydes, via a retro-aldol mechanism. The protein is Serine hydroxymethyltransferase of Anaplasma phagocytophilum (strain HZ).